The chain runs to 473 residues: MSKPVITRFAPSPTGYLHIGGARTALFNWLYAKHCGGKMLLRIEDTDRERSTEAATAAILDGLTWLGLDWDGEAISQFERAPRHREVAEELVANGKAYYCYASPEELEEMREKARAEGRPPRYDGRWRDRDPSEAPAGVKPVIRIKAPRDGETVVHDAVQGDVRFPNKDLDDFIILRSDGTPTYMHAVVVDDHDMGVTHIIRGDDHLTNAARQTIIYNAMGWDVPQMSHIPLIHGADGAKLSKRHGALGVDAYRAMGYLPAALRNYLVRLGWSHGDDEIMSTEQMIEWFDVKDINKGAARFDFQKLEAINGLYMRSSDDQALFDALVAVLPEIEGGKELAEALDDKGRAQLLLAMPGLKERAKTLVELADGAKFIFASRPLALDEKAASLLNDEGRAVLKPVYPVLEAVGEWTAESLDAAIRAHAEAEGLKLGKIAQPLRAALTGRATSPGVFDVLVVLGREESLARIGDQIG.

Positions 11 to 21 (PSPTGYLHIGG) match the 'HIGH' region motif. The span at 113 to 133 (KARAEGRPPRYDGRWRDRDPS) shows a compositional bias: basic and acidic residues. The disordered stretch occupies residues 113–136 (KARAEGRPPRYDGRWRDRDPSEAP). Positions 240–244 (KLSKR) match the 'KMSKS' region motif. K243 is a binding site for ATP.

This sequence belongs to the class-I aminoacyl-tRNA synthetase family. Glutamate--tRNA ligase type 1 subfamily. As to quaternary structure, monomer.

It localises to the cytoplasm. The enzyme catalyses tRNA(Glu) + L-glutamate + ATP = L-glutamyl-tRNA(Glu) + AMP + diphosphate. In terms of biological role, catalyzes the attachment of glutamate to tRNA(Glu) in a two-step reaction: glutamate is first activated by ATP to form Glu-AMP and then transferred to the acceptor end of tRNA(Glu). The sequence is that of Glutamate--tRNA ligase 2 from Brucella canis (strain ATCC 23365 / NCTC 10854 / RM-666).